We begin with the raw amino-acid sequence, 249 residues long: Segregation and condensation protein A (249 aa).

This sequence belongs to the ScpA family. As to quaternary structure, component of a cohesin-like complex composed of ScpA, ScpB and the Smc homodimer, in which ScpA and ScpB bind to the head domain of Smc. The presence of the three proteins is required for the association of the complex with DNA.

The protein resides in the cytoplasm. Functionally, participates in chromosomal partition during cell division. May act via the formation of a condensin-like complex containing Smc and ScpB that pull DNA away from mid-cell into both cell halves. This chain is Segregation and condensation protein A, found in Listeria monocytogenes serotype 4b (strain CLIP80459).